Here is a 359-residue protein sequence, read N- to C-terminus: UDP-3-O-acylglucosamine N-acyltransferase (359 aa).

The active-site Proton acceptor is His-253.

The protein belongs to the transferase hexapeptide repeat family. LpxD subfamily. In terms of assembly, homotrimer.

The enzyme catalyses a UDP-3-O-[(3R)-3-hydroxyacyl]-alpha-D-glucosamine + a (3R)-hydroxyacyl-[ACP] = a UDP-2-N,3-O-bis[(3R)-3-hydroxyacyl]-alpha-D-glucosamine + holo-[ACP] + H(+). It functions in the pathway bacterial outer membrane biogenesis; LPS lipid A biosynthesis. In terms of biological role, catalyzes the N-acylation of UDP-3-O-acylglucosamine using 3-hydroxyacyl-ACP as the acyl donor. Is involved in the biosynthesis of lipid A, a phosphorylated glycolipid that anchors the lipopolysaccharide to the outer membrane of the cell. The chain is UDP-3-O-acylglucosamine N-acyltransferase from Burkholderia lata (strain ATCC 17760 / DSM 23089 / LMG 22485 / NCIMB 9086 / R18194 / 383).